The sequence spans 241 residues: Uridylate kinase (241 aa).

ATP-binding positions include 15–18 (KLSG), Gly-58, and Arg-62. Residues Asp-77 and 138–145 (TGNPYFTT) contribute to the UMP site. Residues Thr-165, Tyr-171, and Asp-174 each coordinate ATP.

It belongs to the UMP kinase family. In terms of assembly, homohexamer.

The protein localises to the cytoplasm. The enzyme catalyses UMP + ATP = UDP + ADP. It participates in pyrimidine metabolism; CTP biosynthesis via de novo pathway; UDP from UMP (UMPK route): step 1/1. With respect to regulation, inhibited by UTP. Catalyzes the reversible phosphorylation of UMP to UDP. This chain is Uridylate kinase, found in Desulfotalea psychrophila (strain LSv54 / DSM 12343).